Here is a 240-residue protein sequence, read N- to C-terminus: Biosynthetic peptidoglycan transglycosylase (240 aa).

A helical transmembrane segment spans residues 15–35 (WMFYLGAVVAIAWLATQAFYF).

The protein belongs to the glycosyltransferase 51 family.

The protein localises to the cell inner membrane. It catalyses the reaction [GlcNAc-(1-&gt;4)-Mur2Ac(oyl-L-Ala-gamma-D-Glu-L-Lys-D-Ala-D-Ala)](n)-di-trans,octa-cis-undecaprenyl diphosphate + beta-D-GlcNAc-(1-&gt;4)-Mur2Ac(oyl-L-Ala-gamma-D-Glu-L-Lys-D-Ala-D-Ala)-di-trans,octa-cis-undecaprenyl diphosphate = [GlcNAc-(1-&gt;4)-Mur2Ac(oyl-L-Ala-gamma-D-Glu-L-Lys-D-Ala-D-Ala)](n+1)-di-trans,octa-cis-undecaprenyl diphosphate + di-trans,octa-cis-undecaprenyl diphosphate + H(+). Its pathway is cell wall biogenesis; peptidoglycan biosynthesis. Its function is as follows. Peptidoglycan polymerase that catalyzes glycan chain elongation from lipid-linked precursors. In Paraburkholderia xenovorans (strain LB400), this protein is Biosynthetic peptidoglycan transglycosylase.